The following is a 219-amino-acid chain: MTQDEMKKAAGWAALKYVEKDSIVGVGTGSTVNHFIDALATMKADIEGAVSSSEASTQKMKALGIPVYDLNSVDKLSVYVDGADEINGHMDMIKGGGAALTREKIVAAVAEKFVCIVDNTKQVDILGEFPLPVEVIPMARSYVARELVKLGGDPVYREGVVTDNGNVILDVYNLKIINPKELEEKINAIVGVVTNGLFAKRGADVLLVGTPEGVKTFTA.

Residues 28 to 31 (TGST), 81 to 84 (DGAD), and 94 to 97 (KGGG) contribute to the substrate site. Residue glutamate 103 is the Proton acceptor of the active site. A substrate-binding site is contributed by lysine 121.

Belongs to the ribose 5-phosphate isomerase family. As to quaternary structure, homodimer.

It catalyses the reaction aldehydo-D-ribose 5-phosphate = D-ribulose 5-phosphate. The protein operates within carbohydrate degradation; pentose phosphate pathway; D-ribose 5-phosphate from D-ribulose 5-phosphate (non-oxidative stage): step 1/1. In terms of biological role, catalyzes the reversible conversion of ribose-5-phosphate to ribulose 5-phosphate. The protein is Ribose-5-phosphate isomerase A of Shewanella sp. (strain MR-4).